The sequence spans 287 residues: MARRRKEVQRGESRSHRSRTRSKTAHHRKFSRRQLRPSLRARLNAGIRCHNRFYRALVRSLEEVFEGGGDGRLAYTIIPQCKPAGGKIVVMFEVNLGLRKPDCICLLETQHEMKCIVIELKTCRFSKSLMTESKLRQGYTGTLQLRDSARLLENLAVPGTEKVKILSLLVFVAQRGMNILAVKTVGETVINVSSELFFVTLATRSQYLKTFCAKLEPRVSHARSKYQQESAKNADLASPAPSALQTVAALFSSRVGKESATKPASYSTSTEESKNLSEPCFDPDSNL.

2 disordered regions span residues 1 to 33 and 254 to 287; these read MARR…FSRR and RVGK…DSNL. Positions 16–33 are enriched in basic residues; it reads HRSRTRSKTAHHRKFSRR.

It belongs to the herpesviridae UL24 family.

The protein localises to the virion. The protein resides in the host cytoplasm. It localises to the host nucleus. Its subcellular location is the host nucleolus. It is found in the host Golgi apparatus. In terms of biological role, may participate in nuclear egress of viral particles. Plays a role in the dispersal of several host nucleolar proteins including NCL/nucleolin and NPM1. Since deletion of host NCL/nucleolin negatively impact on nuclear egress, UL24 supposedly acts on this process through its effect on host nucleoli. The protein is Protein UL24 homolog of Infectious laryngotracheitis virus (strain Thorne V882) (ILTV).